A 329-amino-acid chain; its full sequence is Isopenicillin N synthase (329 aa).

Isopenicillin N is bound by residues R87, Y91, S183, and Y189. R87, Y91, S183, Y189, H212, and D214 together coordinate N-[(5S)-5-amino-5-carboxypentanoyl]-L-cysteinyl-D-valine. One can recognise a Fe2OG dioxygenase domain in the interval 180-286 (TLSSVSLIRY…RLSLPFFLNA (107 aa)). Residues H212, D214, and H268 each coordinate Fe(2+). R277 lines the 2-oxoglutarate pocket. Residue S279 coordinates isopenicillin N. S279 lines the N-[(5S)-5-amino-5-carboxypentanoyl]-L-cysteinyl-D-valine pocket.

The protein belongs to the iron/ascorbate-dependent oxidoreductase family. Fe cation serves as cofactor. Requires L-ascorbate as cofactor.

It carries out the reaction N-[(5S)-5-amino-5-carboxypentanoyl]-L-cysteinyl-D-valine + O2 = isopenicillin N + 2 H2O. It functions in the pathway antibiotic biosynthesis; penicillin G biosynthesis; penicillin G from L-alpha-aminoadipate and L-cysteine and L-valine: step 2/3. Functionally, removes, in the presence of oxygen, 4 hydrogen atoms from delta-L-(alpha-aminoadipyl)-L-cysteinyl-D-valine (ACV) to form the azetidinone and thiazolidine rings of isopenicillin. The protein is Isopenicillin N synthase (pcbC) of Streptomyces jumonjinensis.